Reading from the N-terminus, the 51-residue chain is Lantibiotic streptococcin A-FF22 (51 aa).

Positions 1-25 (MEKNNEVINSIQEVSLEELDQIIGA) are excised as a propeptide. 2 cross-links (beta-methyllanthionine (Thr-Cys)) span residues 33-38 (TISHEC) and 42-50 (TWAFLATCC). Positions 35 to 49 (SHECHLNTWAFLATC) form a cross-link, lanthionine (Ser-Cys). Thr48 is modified (2,3-didehydrobutyrine).

Belongs to the type A lantibiotic family. Maturation of lantibiotics involves the enzymatic conversion of Thr, and Ser into dehydrated AA and the formation of thioether bonds with cysteine. This is followed by membrane translocation and cleavage of the modified precursor.

The protein localises to the secreted. Its subcellular location is the cell surface. In terms of biological role, lanthionine-containing peptide antibiotic (lantibiotic) active on certain Gram-positive bacteria. The bactericidal activity of lantibiotics is based on depolarization of energized bacterial cytoplasmic membranes, initiated by the formation of aqueous transmembrane pores. The polypeptide is Lantibiotic streptococcin A-FF22 (scnA) (Streptococcus pyogenes).